Consider the following 274-residue polypeptide: Triosephosphate isomerase (274 aa).

Position 31–33 (31–33 (NWK)) interacts with substrate. The active-site Electrophile is the His118. Glu188 serves as the catalytic Proton acceptor. Residues Gly194, Ser234, and 255 to 256 (GG) each bind substrate.

This sequence belongs to the triosephosphate isomerase family. In terms of assembly, homodimer.

It is found in the cytoplasm. The enzyme catalyses D-glyceraldehyde 3-phosphate = dihydroxyacetone phosphate. It functions in the pathway carbohydrate biosynthesis; gluconeogenesis. It participates in carbohydrate degradation; glycolysis; D-glyceraldehyde 3-phosphate from glycerone phosphate: step 1/1. In terms of biological role, involved in the gluconeogenesis. Catalyzes stereospecifically the conversion of dihydroxyacetone phosphate (DHAP) to D-glyceraldehyde-3-phosphate (G3P). The protein is Triosephosphate isomerase of Chlamydia trachomatis serovar L2 (strain ATCC VR-902B / DSM 19102 / 434/Bu).